The following is a 258-amino-acid chain: UPF0246 protein CGSHiEE_07045 (258 aa).

This sequence belongs to the UPF0246 family.

The sequence is that of UPF0246 protein CGSHiEE_07045 from Haemophilus influenzae (strain PittEE).